Consider the following 150-residue polypeptide: UPF0178 protein Bcen2424_1660 (150 aa).

Belongs to the UPF0178 family.

This is UPF0178 protein Bcen2424_1660 from Burkholderia cenocepacia (strain HI2424).